The sequence spans 924 residues: Isoleucine--tRNA ligase (924 aa).

Residues 58–68 (PYANGQIHVGH) carry the 'HIGH' region motif. Glutamate 561 is an L-isoleucyl-5'-AMP binding site. Residues 602-606 (KMSKS) carry the 'KMSKS' region motif. Residue lysine 605 coordinates ATP. Zn(2+) is bound by residues cysteine 887, cysteine 890, cysteine 907, and cysteine 910.

This sequence belongs to the class-I aminoacyl-tRNA synthetase family. IleS type 1 subfamily. Monomer. Requires Zn(2+) as cofactor.

It is found in the cytoplasm. The enzyme catalyses tRNA(Ile) + L-isoleucine + ATP = L-isoleucyl-tRNA(Ile) + AMP + diphosphate. Functionally, catalyzes the attachment of isoleucine to tRNA(Ile). As IleRS can inadvertently accommodate and process structurally similar amino acids such as valine, to avoid such errors it has two additional distinct tRNA(Ile)-dependent editing activities. One activity is designated as 'pretransfer' editing and involves the hydrolysis of activated Val-AMP. The other activity is designated 'posttransfer' editing and involves deacylation of mischarged Val-tRNA(Ile). This is Isoleucine--tRNA ligase from Dichelobacter nodosus (strain VCS1703A).